The chain runs to 596 residues: Elongation factor 4 (596 aa).

A tr-type G domain is found at K2–E184. Residues D14–T19 and N131–D134 contribute to the GTP site.

The protein belongs to the TRAFAC class translation factor GTPase superfamily. Classic translation factor GTPase family. LepA subfamily.

The protein localises to the cell inner membrane. It carries out the reaction GTP + H2O = GDP + phosphate + H(+). In terms of biological role, required for accurate and efficient protein synthesis under certain stress conditions. May act as a fidelity factor of the translation reaction, by catalyzing a one-codon backward translocation of tRNAs on improperly translocated ribosomes. Back-translocation proceeds from a post-translocation (POST) complex to a pre-translocation (PRE) complex, thus giving elongation factor G a second chance to translocate the tRNAs correctly. Binds to ribosomes in a GTP-dependent manner. In Shewanella amazonensis (strain ATCC BAA-1098 / SB2B), this protein is Elongation factor 4.